We begin with the raw amino-acid sequence, 131 residues long: Large ribosomal subunit protein bL21 (131 aa).

Positions 111-131 are disordered; it reads VAAATGTADARRAAHNASAKE.

The protein belongs to the bacterial ribosomal protein bL21 family. In terms of assembly, part of the 50S ribosomal subunit. Contacts protein L20.

Its function is as follows. This protein binds to 23S rRNA in the presence of protein L20. The protein is Large ribosomal subunit protein bL21 of Cereibacter sphaeroides (strain ATCC 17029 / ATH 2.4.9) (Rhodobacter sphaeroides).